The chain runs to 327 residues: tRNA pseudouridine synthase B (327 aa).

Asp83 acts as the Nucleophile in catalysis.

This sequence belongs to the pseudouridine synthase TruB family. Type 1 subfamily.

The enzyme catalyses uridine(55) in tRNA = pseudouridine(55) in tRNA. Responsible for synthesis of pseudouridine from uracil-55 in the psi GC loop of transfer RNAs. The polypeptide is tRNA pseudouridine synthase B (Mesomycoplasma hyopneumoniae (strain 232) (Mycoplasma hyopneumoniae)).